The sequence spans 502 residues: Glycerol kinase (502 aa).

Threonine 14 is an ADP binding site. ATP-binding residues include threonine 14, threonine 15, and serine 16. Position 14 (threonine 14) interacts with sn-glycerol 3-phosphate. Arginine 18 serves as a coordination point for ADP. Arginine 84, glutamate 85, tyrosine 136, and aspartate 246 together coordinate sn-glycerol 3-phosphate. 5 residues coordinate glycerol: arginine 84, glutamate 85, tyrosine 136, aspartate 246, and glutamine 247. ADP is bound by residues threonine 268 and glycine 311. 4 residues coordinate ATP: threonine 268, glycine 311, glutamine 315, and glycine 412. Glycine 412 and asparagine 416 together coordinate ADP.

It belongs to the FGGY kinase family. Homotetramer and homodimer (in equilibrium). Heterodimer with EIIA-Glc. Binds 1 zinc ion per glycerol kinase EIIA-Glc dimer. The zinc ion is important for dimerization.

The catalysed reaction is glycerol + ATP = sn-glycerol 3-phosphate + ADP + H(+). Its pathway is polyol metabolism; glycerol degradation via glycerol kinase pathway; sn-glycerol 3-phosphate from glycerol: step 1/1. Activity of this regulatory enzyme is affected by several metabolites. Allosterically and non-competitively inhibited by fructose 1,6-bisphosphate (FBP) and unphosphorylated phosphocarrier protein EIIA-Glc (III-Glc), an integral component of the bacterial phosphotransferase (PTS) system. Its function is as follows. Key enzyme in the regulation of glycerol uptake and metabolism. Catalyzes the phosphorylation of glycerol to yield sn-glycerol 3-phosphate. This chain is Glycerol kinase, found in Salmonella arizonae (strain ATCC BAA-731 / CDC346-86 / RSK2980).